A 344-amino-acid polypeptide reads, in one-letter code: UDP-3-O-acylglucosamine N-acyltransferase (344 aa).

H248 (proton acceptor) is an active-site residue.

Belongs to the transferase hexapeptide repeat family. LpxD subfamily. In terms of assembly, homotrimer.

The catalysed reaction is a UDP-3-O-[(3R)-3-hydroxyacyl]-alpha-D-glucosamine + a (3R)-hydroxyacyl-[ACP] = a UDP-2-N,3-O-bis[(3R)-3-hydroxyacyl]-alpha-D-glucosamine + holo-[ACP] + H(+). It participates in bacterial outer membrane biogenesis; LPS lipid A biosynthesis. Functionally, catalyzes the N-acylation of UDP-3-O-acylglucosamine using 3-hydroxyacyl-ACP as the acyl donor. Is involved in the biosynthesis of lipid A, a phosphorylated glycolipid that anchors the lipopolysaccharide to the outer membrane of the cell. The protein is UDP-3-O-acylglucosamine N-acyltransferase of Prochlorococcus marinus (strain MIT 9515).